Consider the following 294-residue polypeptide: Universal stress protein MSMEG_3950/MSMEI_3859 (294 aa).

Gly13 provides a ligand contact to ATP. Lys109 is covalently cross-linked (Isoglutamyl lysine isopeptide (Lys-Gln) (interchain with Q-Cter in protein Pup)). Residues 117 to 123 (GNRGMGA), 131 to 132 (ST), Gly164, Asp197, 261 to 267 (GSHGRGG), and 275 to 277 (SVS) contribute to the ATP site.

The protein belongs to the universal stress protein A family.

The chain is Universal stress protein MSMEG_3950/MSMEI_3859 from Mycolicibacterium smegmatis (strain ATCC 700084 / mc(2)155) (Mycobacterium smegmatis).